The chain runs to 359 residues: Type-1 angiotensin II receptor (359 aa).

Over 1-25 (MVPNYSTEETVKRIHVDCPVSGRHS) the chain is Extracellular. The N-linked (GlcNAc...) asparagine glycan is linked to Asn4. Asp17 provides a ligand contact to angiotensin II. 2 cysteine pairs are disulfide-bonded: Cys18–Cys274 and Cys101–Cys180. The helical transmembrane segment at 26–55 (YIYIMVPTVYSIIFIIGIFGNSLVVIVIYC) threads the bilayer. Residues 56 to 61 (YMKLKT) lie on the Cytoplasmic side of the membrane. A helical transmembrane segment spans residues 62–89 (VASIFLLNLALADLCFLITLPLWAAYTA). Topologically, residues 90 to 98 (MEYQWPFGN) are extracellular. The helical transmembrane segment at 99–125 (CLCKLASAGISFNLYASVFLLTCLSID) threads the bilayer. Over 126–141 (RYLAIVHPVKSRIRRT) the chain is Cytoplasmic. A helical transmembrane segment spans residues 142–165 (MFVARVTCIVIWLLAGVASLPVII). Topologically, residues 166–190 (HRNIFFAENLNMTVCGFRYDNNNTT) are extracellular. An angiotensin II-binding site is contributed by Arg167. Asn176 carries N-linked (GlcNAc...) asparagine glycosylation. Positions 182 and 184 each coordinate angiotensin II. Residues Asn187 and Asn188 are each glycosylated (N-linked (GlcNAc...) asparagine). A helical transmembrane segment spans residues 191–216 (LRVGLGLSKNLLGFLIPFLIILTSYT). Lys199 serves as a coordination point for angiotensin II. The Cytoplasmic segment spans residues 217–239 (LIWKTLKKAYQIQRNKTRNDDIF). The helical transmembrane segment at 240–268 (KMIVAIVFFFFFSWIPHQVFTFLDVLIQL) threads the bilayer. The Extracellular portion of the chain corresponds to 269–278 (HVITDCKITD). Residues 279 to 304 (IVDTAMPFTICIAYFNNCLNPFFYVF) form a helical membrane-spanning segment. Residues 305–359 (FGKNFKKYFLQLIKYIPPNVSTHPSLTTKMSSLSYRPPENIRLPTKKTAGSFDAE) lie on the Cytoplasmic side of the membrane.

The protein belongs to the G-protein coupled receptor 1 family. C-terminal Ser or Thr residues may be phosphorylated.

Its subcellular location is the cell membrane. Its function is as follows. Receptor for angiotensin II, a vasoconstricting peptide, which acts as a key regulator of blood pressure and sodium retention by the kidney. The activated receptor in turn couples to G-alpha proteins G(q) (GNAQ, GNA11, GNA14 or GNA15) and thus activates phospholipase C and increases the cytosolic Ca(2+) concentrations, which in turn triggers cellular responses such as stimulation of protein kinase C. This chain is Type-1 angiotensin II receptor (AGTR1), found in Gallus gallus (Chicken).